The chain runs to 107 residues: uncharacterized protein (107 aa).

Transmembrane regions (helical) follow at residues 11–31 (CVNF…ILCI) and 58–78 (LFFL…LAFQ).

Its subcellular location is the mitochondrion membrane. This is an uncharacterized protein from Saccharomyces cerevisiae (strain ATCC 204508 / S288c) (Baker's yeast).